Consider the following 559-residue polypeptide: YTH domain-containing family protein 1 (559 aa).

The segment at 1 to 49 (MSATSVDPQRTKGQDNKVQNGSLHQKDAVHDNDFEPYLSGQSNPSNSYP) is disordered. An N-acetylserine modification is found at serine 2. Basic and acidic residues predominate over residues 24 to 33 (HQKDAVHDND). Serine 182 carries the phosphoserine modification. Residues 239 to 365 (SKPAKPQPKM…PTSAPSVESH (127 aa)) form a disordered region. Composition is skewed to low complexity over residues 279–305 (PAPKASAPQQTPSPQAAPQPQQVAQPL) and 314–326 (QPQYQSPQQPLQP). The span at 343-361 (GANSDSNSVGNAQPTSAPS) shows a compositional bias: polar residues. A YTH domain is found at 389-523 (GRVFIIKSYS…EKAKQVLKII (135 aa)). Residues 395 to 397 (KSY), aspartate 401, 411 to 412 (WC), asparagine 441, tryptophan 465, and tryptophan 470 each bind RNA.

The protein belongs to the YTHDF family. YTHDF1 subfamily. In terms of assembly, interacts with CNOT1; promoting recruitment of the CCR4-NOT complex. Interacts with ribosomes. Interacts with eIF3 (EIF3A or EIF3B). Interacts with YTHDF3. In terms of processing, ubiquitinated by the CUL7-FBXW8 E3 ligase complex leading to degradation. Deubiquitinated and stabilized by USP5 by removing 'Lys-11'-linked polyubiquitination. In terms of tissue distribution, in brain, preferentially expressed in the hippocampus.

The protein localises to the cytoplasm. It localises to the P-body. It is found in the stress granule. Its function is as follows. Specifically recognizes and binds N6-methyladenosine (m6A)-containing mRNAs, and regulates their stability. M6A is a modification present at internal sites of mRNAs and some non-coding RNAs and plays a role in mRNA stability and processing. Acts as a regulator of mRNA stability by promoting degradation of m6A-containing mRNAs via interaction with the CCR4-NOT complex. The YTHDF paralogs (YTHDF1, YTHDF2 and YTHDF3) share m6A-containing mRNAs targets and act redundantly to mediate mRNA degradation and cellular differentiation. Required to facilitate learning and memory formation in the hippocampus by binding to m6A-containing neuronal mRNAs. Acts as a regulator of axon guidance by binding to m6A-containing ROBO3 transcripts. Acts as a negative regulator of antigen cross-presentation in myeloid dendritic cells. In the context of tumorigenesis, negative regulation of antigen cross-presentation limits the anti-tumor response by reducing efficiency of tumor-antigen cross-presentation. Promotes formation of phase-separated membraneless compartments, such as P-bodies or stress granules, by undergoing liquid-liquid phase separation upon binding to mRNAs containing multiple m6A-modified residues: polymethylated mRNAs act as a multivalent scaffold for the binding of YTHDF proteins, juxtaposing their disordered regions and thereby leading to phase separation. The resulting mRNA-YTHDF complexes then partition into different endogenous phase-separated membraneless compartments, such as P-bodies, stress granules or neuronal RNA granules. The polypeptide is YTH domain-containing family protein 1 (Mus musculus (Mouse)).